The chain runs to 273 residues: Elongator complex protein 6 (273 aa).

It belongs to the ELP6 family. Component of the elongator complex which consists of ELP1/IKI3, ELP2, ELP3, ELP4, ELP5/IKI1 and ELP6. The elongator complex is composed of two copies of the Elp123 subcomplex (composed of ELP1/IKI3, ELP2 and ELP3) and two copies of the Elp456 subcomplex (composed of ELP4, ELP5/IKI1 and ELP6). The Elp123 subcomplex forms a two-lobed scaffold, which binds the Elp456 subcomplex asymmetrically. In each lobe, ELP2 is tightly sandwiched between ELP1/IKI3 and ELP3. The Elp123 subcomplex binds tRNA through ELP1/IKI3 and ELP3 and can bind 2 tRNAs simultaneously. tRNA-binding by the Elp123 subcomplex induces conformational rearrangements which precisely position the targeted anticodon base in the active site. The Elp456 subcomplex binds tRNA and has ATPase activity.

The protein localises to the cytoplasm. The protein resides in the nucleus. It participates in tRNA modification; 5-methoxycarbonylmethyl-2-thiouridine-tRNA biosynthesis. Component of the elongator complex which is required for multiple tRNA modifications, including mcm5U (5-methoxycarbonylmethyl uridine), mcm5s2U (5-methoxycarbonylmethyl-2-thiouridine), and ncm5U (5-carbamoylmethyl uridine). The elongator complex catalyzes formation of carboxymethyluridine in the wobble base at position 34 in tRNAs. It functions as a gamma-toxin target (TOT); disruption of the complex confers resistance to Kluyveromyces lactis toxin zymocin (pGKL1 killer toxin). May also be involved in sensitivity to Pichia inositovora toxin. In Saccharomyces cerevisiae (strain ATCC 204508 / S288c) (Baker's yeast), this protein is Elongator complex protein 6 (ELP6).